The sequence spans 865 residues: DNA-directed RNA polymerase subunit Rpo1N (865 aa).

Zn(2+) is bound by residues Cys-60, Cys-63, Cys-70, His-73, Cys-100, Cys-103, Cys-146, and Cys-149. Asp-451, Asp-453, and Asp-455 together coordinate Mg(2+). The disordered stretch occupies residues Glu-500 to Gly-531. Over residues Arg-515–Gly-531 the composition is skewed to basic and acidic residues.

This sequence belongs to the RNA polymerase beta' chain family. In terms of assembly, part of the RNA polymerase complex. The cofactor is Mg(2+). Zn(2+) is required as a cofactor.

The protein localises to the cytoplasm. It catalyses the reaction RNA(n) + a ribonucleoside 5'-triphosphate = RNA(n+1) + diphosphate. In terms of biological role, DNA-dependent RNA polymerase (RNAP) catalyzes the transcription of DNA into RNA using the four ribonucleoside triphosphates as substrates. Forms the clamp head domain. This is DNA-directed RNA polymerase subunit Rpo1N from Methanothermobacter thermautotrophicus (strain Winter) (Methanobacterium thermoautotrophicum).